A 902-amino-acid chain; its full sequence is Adhesion G-protein coupled receptor D1 (902 aa).

Positions 1-25 (MKKLLPLCCWHSWLLLFYCDFQVRG) are cleaved as a signal peptide. Residues 26-598 (AHTRSHVHPG…GHQVALSSIS (573 aa)) lie on the Extracellular side of the membrane. 15 N-linked (GlcNAc...) asparagine glycosylation sites follow: N68, N76, N83, N89, N121, N183, N217, N310, N330, N337, N347, N422, N504, N529, and N561. In terms of domain architecture, Pentraxin (PTX) spans 111 to 304 (KGVTFLYYRK…VNTMAPTNAY (194 aa)). Positions 399-585 (QVAIVGSSSM…AILMQVVPLE (187 aa)) constitute a GAIN-B domain. 2 disulfides stabilise this stretch: C538-C567 and C555-C569. The GPS stretch occupies residues 538-585 (CAFLDFSSGEGIWSNQGCALTEGNLSYSICRCTHLTNFAILMQVVPLE). Positions 574-582 (NFAILMQVV) are stachel. Residue Q591 coordinates 17beta-hydroxy-5alpha-androstan-3-one. A helical membrane pass occupies residues 599–619 (YIGCSLSVLCLAITLVTFAVL). At 620–630 (SSVSTIRNQRY) the chain is on the cytoplasmic side. The helical transmembrane segment at 631 to 651 (HIHANLSCAVLVAQVLLLISF) threads the bilayer. Over 652–661 (RFEPGTAPCQ) the chain is Extracellular. The cysteines at positions 660 and 732 are disulfide-linked. A helical membrane pass occupies residues 662-682 (VLAMLLHYFFLSAFAWMLVEG). The Cytoplasmic portion of the chain corresponds to 683–702 (LHLYSMVIKVFGSEDSKHRY). Residues 703 to 723 (YYGIGWGFPLLICIISIVFAM) traverse the membrane as a helical segment. The Extracellular segment spans residues 724–739 (DSYGTSKNCWLSLGNG). Residues 740–760 (AIWAFVAPALFIIVVNIGILI) form a helical membrane-spanning segment. Topologically, residues 761–788 (AVTRVISQISAENYKIHGDPSAFKLTAK) are cytoplasmic. The chain crosses the membrane as a helical span at residues 789 to 809 (AVAVLLPILGTSWVFGVLAVN). Over 810–812 (NQA) the chain is Extracellular. Residues 813–833 (MVFQYMFAILNSLQGFFIFLF) form a helical membrane-spanning segment. The Cytoplasmic portion of the chain corresponds to 834–902 (HCLLNSEVRA…SGHRVDLSAV (69 aa)). Residues 865-902 (KPFSSDIMNGTRPATGSTRLSPWDKSSHSGHRVDLSAV) form a disordered region. Residues 870-884 (DIMNGTRPATGSTRL) show a composition bias toward polar residues. Residues 889-902 (KSSHSGHRVDLSAV) show a composition bias toward basic and acidic residues.

Belongs to the G-protein coupled receptor 2 family. Adhesion G-protein coupled receptor (ADGR) subfamily. Heterodimer of 2 chains generated by proteolytic processing; the large extracellular N-terminal fragment and the membrane-bound C-terminal fragment predominantly remain associated and non-covalently linked. Interacts with ESYT1; interaction takes place in absence of cytosolic calcium and inhibits the G protein-coupled receptor activity of ADGRD1. Autoproteolytically processed at the GPS region of the GAIN-B domain; this cleavage modulates receptor activity. Cleavage takes place early in the secretory pathway before N-glycosylation.

It localises to the cell membrane. With respect to regulation, forms a heterodimer of 2 chains generated by proteolytic processing that remain associated through non-covalent interactions mediated by the GAIN-B domain. In the inactivated receptor, the Stachel sequence (also named stalk) is embedded in the GAIN-B domain, where it adopts a beta-strand conformation. On activation, the Stachel moves into the 7 transmembrane region and adopts a twisted hook-shaped configuration that forms contacts within the receptor, leading to coupling of a G-alpha protein, which activates signaling. The cleaved GAIN-B and N-terminal domains can then dissociate from the rest of the receptor. Interaction with ESYT1 in absence of cytosolic calcium inhibits the G protein-coupled receptor activity; interaction and inhibition is relieved when cytosolic calcium increases. Functionally, adhesion G-protein coupled receptor (aGPCR) for androgen hormone 5alpha-dihydrotestosterone (5alpha-DHT), also named 17beta-hydroxy-5alpha-androstan-3-one, the most potent hormone among androgens. Also activated by methenolone drug. Ligand binding causes a conformation change that triggers signaling via guanine nucleotide-binding proteins (G proteins) and modulates the activity of downstream effectors, such as adenylate cyclase. ADGRD1 is coupled to G(s) G proteins and mediates activation of adenylate cyclase activity. Acts as a 5alpha-DHT receptor in muscle cells, thereby increasing intracellular cyclic AMP (cAMP) levels and enhancing muscle strength. The polypeptide is Adhesion G-protein coupled receptor D1 (ADGRD1) (Bos taurus (Bovine)).